The following is a 426-amino-acid chain: MGNCLDSSAKVDSSSHSPHANSASLSSRVSSKTSRSTVPSSLSINSYSSVESLPTPRTEGEILSSPNLKAFTFNELKNATRNFRPDSLLGEGGFGYVFKGWIDGTTLTASKPGSGIVVAVKKLKTEGYQGHKEWLTEVNYLGQLSHPNLVKLVGYCVEGENRLLVYEFMPKGSLENHLFRRGAQPLTWAIRMKVAIGAAKGLTFLHDAKSQVIYRDFKAANILLDAEFNSKLSDFGLAKAGPTGDKTHVSTQVMGTHGYAAPEYVATGRLTAKSDVYSFGVVLLELLSGRRAVDKSKVGMEQSLVDWATPYLGDKRKLFRIMDTRLGGQYPQKGAYTAASLALQCLNPDAKLRPKMSEVLAKLDQLESTKPGTGVGNRQAQIDSPRGSNGSIVQKSPRRYSYDRPLLHITPGASPLPTHNHSPRVR.

The interval 1-42 is disordered; sequence MGNCLDSSAKVDSSSHSPHANSASLSSRVSSKTSRSTVPSSL. A lipid anchor (N-myristoyl glycine) is attached at Gly-2. Cys-4 is lipidated: S-palmitoyl cysteine. The segment covering 7–42 has biased composition (low complexity); that stretch reads SSAKVDSSSHSPHANSASLSSRVSSKTSRSTVPSSL. Residue Thr-72 is modified to Phosphothreonine. The Protein kinase domain maps to 83-366; sequence FRPDSLLGEG…SEVLAKLDQL (284 aa). Residues 89 to 97 and Lys-121 contribute to the ATP site; that span reads LGEGGFGYV. A Phosphotyrosine modification is found at Tyr-166. The active-site Proton acceptor is the Asp-216. Ser-250 is modified (phosphoserine). 2 positions are modified to phosphothreonine: Thr-251 and Thr-256. Phosphotyrosine is present on Tyr-264. The segment covering 367–394 has biased composition (polar residues); it reads ESTKPGTGVGNRQAQIDSPRGSNGSIVQ. The tract at residues 367–426 is disordered; it reads ESTKPGTGVGNRQAQIDSPRGSNGSIVQKSPRRYSYDRPLLHITPGASPLPTHNHSPRVR.

It belongs to the protein kinase superfamily. Ser/Thr protein kinase family. As to quaternary structure, interacts with the Xanthomonas campestris effector XopAC/AvrAC. In terms of tissue distribution, strongly expressed in leaves, moderately in flowers, and barely in roots.

The protein localises to the cell membrane. It is found in the nucleus. The enzyme catalyses L-seryl-[protein] + ATP = O-phospho-L-seryl-[protein] + ADP + H(+). The catalysed reaction is L-threonyl-[protein] + ATP = O-phospho-L-threonyl-[protein] + ADP + H(+). Functionally, may be involved in plant defense signaling. This chain is Probable serine/threonine-protein kinase PBL3, found in Arabidopsis thaliana (Mouse-ear cress).